The primary structure comprises 326 residues: Putative [LysW]-lysine/[LysW]-ornithine hydrolase (326 aa).

Position 66 (H66) interacts with Zn(2+). Residue D68 is part of the active site. D90 provides a ligand contact to Zn(2+). The active-site Proton acceptor is E117. Zn(2+) contacts are provided by E118, E139, and H297.

It belongs to the peptidase M20A family. LysK subfamily. The cofactor is Zn(2+). Co(2+) serves as cofactor.

The protein localises to the cytoplasm. It catalyses the reaction [amino-group carrier protein]-C-terminal-gamma-(L-lysyl)-L-glutamate + H2O = [amino-group carrier protein]-C-terminal-L-glutamate + L-lysine. It carries out the reaction [amino-group carrier protein]-C-terminal-gamma-(L-ornithyl)-L-glutamate + H2O = [amino-group carrier protein]-C-terminal-L-glutamate + L-ornithine. The protein operates within amino-acid biosynthesis; L-lysine biosynthesis via AAA pathway; L-lysine from L-alpha-aminoadipate (Thermus route): step 5/5. It participates in amino-acid biosynthesis; L-arginine biosynthesis. Its function is as follows. Catalyzes the release of L-lysine from [LysW]-gamma-L-lysine and the release of L-ornithine from [LysW]-L-ornithine. This is Putative [LysW]-lysine/[LysW]-ornithine hydrolase from Pyrococcus furiosus (strain ATCC 43587 / DSM 3638 / JCM 8422 / Vc1).